The following is a 339-amino-acid chain: Lipoyl synthase (339 aa).

The segment at 13–35 (RPKLDAPARPRHPEKAHRPDTAI) is disordered. Positions 68, 73, 79, 94, 98, 101, and 307 each coordinate [4Fe-4S] cluster. One can recognise a Radical SAM core domain in the interval 80-296 (WEKRHATFMI…ETTAYAKGFL (217 aa)).

It belongs to the radical SAM superfamily. Lipoyl synthase family. The cofactor is [4Fe-4S] cluster.

The protein resides in the cytoplasm. The enzyme catalyses [[Fe-S] cluster scaffold protein carrying a second [4Fe-4S](2+) cluster] + N(6)-octanoyl-L-lysyl-[protein] + 2 oxidized [2Fe-2S]-[ferredoxin] + 2 S-adenosyl-L-methionine + 4 H(+) = [[Fe-S] cluster scaffold protein] + N(6)-[(R)-dihydrolipoyl]-L-lysyl-[protein] + 4 Fe(3+) + 2 hydrogen sulfide + 2 5'-deoxyadenosine + 2 L-methionine + 2 reduced [2Fe-2S]-[ferredoxin]. It participates in protein modification; protein lipoylation via endogenous pathway; protein N(6)-(lipoyl)lysine from octanoyl-[acyl-carrier-protein]: step 2/2. Its function is as follows. Catalyzes the radical-mediated insertion of two sulfur atoms into the C-6 and C-8 positions of the octanoyl moiety bound to the lipoyl domains of lipoate-dependent enzymes, thereby converting the octanoylated domains into lipoylated derivatives. The protein is Lipoyl synthase of Methylorubrum extorquens (strain PA1) (Methylobacterium extorquens).